We begin with the raw amino-acid sequence, 472 residues long: Type I restriction enzyme BthVORF4518P methylase subunit (472 aa).

S-adenosyl-L-methionine-binding positions include Gln151 to Arg156, Thr181 to Gly183, Asp214, and Asp243 to Ser244.

The protein belongs to the N(4)/N(6)-methyltransferase family. In terms of assembly, the type I restriction/modification system is composed of three polypeptides R, M and S; the restriction enzyme has stoichiometry R(2)M(2)S(1) while the methyltransferase is M(2)S(1).

It catalyses the reaction a 2'-deoxyadenosine in DNA + S-adenosyl-L-methionine = an N(6)-methyl-2'-deoxyadenosine in DNA + S-adenosyl-L-homocysteine + H(+). Functionally, the subtype gamma methyltransferase (M) subunit of a type I restriction enzyme. The M and S subunits together form a methyltransferase (MTase) that methylates two adenine residues of an undetermined sequence. In the presence of the R subunit the complex can also act as an endonuclease, binding to the same target sequence but cutting the DNA some distance from this site. Whether the DNA is cut or modified depends on the methylation state of the target sequence. When the target site is unmodified, the DNA is cut. When the target site is hemimethylated, the complex acts as a maintenance MTase modifying the DNA so that both strands become methylated. After locating a non-methylated recognition site, the enzyme complex serves as a molecular motor that translocates DNA in an ATP-dependent manner until a collision occurs that triggers cleavage. The polypeptide is Type I restriction enzyme BthVORF4518P methylase subunit (Bacteroides thetaiotaomicron (strain ATCC 29148 / DSM 2079 / JCM 5827 / CCUG 10774 / NCTC 10582 / VPI-5482 / E50)).